Reading from the N-terminus, the 476-residue chain is Hydrogenase-4 component F homolog (476 aa).

Helical transmembrane passes span 1–21, 25–45, 54–74, 120–140, 153–173, 202–222, 235–255, 270–290, 307–327, 368–388, 402–422, and 442–462; these read MSAA…SQIS, ISSW…LFLL, FFLV…IGFT, IGLM…MVGI, YFIL…LFYI, LVNI…GLFP, PTPI…YAIL, AGPL…LMFY, MGII…AGLL, LGWG…MGVF, SPLL…ALIL, and LYLP…YIPP.

It belongs to the complex I subunit 5 family.

It localises to the cell inner membrane. In Methylacidiphilum infernorum (isolate V4) (Methylokorus infernorum (strain V4)), this protein is Hydrogenase-4 component F homolog (hyfF).